A 218-amino-acid chain; its full sequence is PKHD-type hydroxylase IL0759 (218 aa).

A Fe2OG dioxygenase domain is found at 76 to 170; it reads QVARVTINRY…RLAMIGWVQS (95 aa). Positions 94, 96, and 151 each coordinate Fe cation. Arg161 contacts 2-oxoglutarate.

The cofactor is Fe(2+). Requires L-ascorbate as cofactor.

The sequence is that of PKHD-type hydroxylase IL0759 from Idiomarina loihiensis (strain ATCC BAA-735 / DSM 15497 / L2-TR).